Consider the following 609-residue polypeptide: Glutamine--fructose-6-phosphate aminotransferase [isomerizing] (609 aa).

The Nucleophile; for GATase activity role is filled by C2. Residues 2–217 (CGIVGAIAGR…DGDTAEIRRD (216 aa)) form the Glutamine amidotransferase type-2 domain. SIS domains lie at 285-425 (AESV…LRGA) and 458-599 (WAEC…VDKP). K604 (for Fru-6P isomerization activity) is an active-site residue.

In terms of assembly, homodimer.

The protein resides in the cytoplasm. The enzyme catalyses D-fructose 6-phosphate + L-glutamine = D-glucosamine 6-phosphate + L-glutamate. In terms of biological role, catalyzes the first step in hexosamine metabolism, converting fructose-6P into glucosamine-6P using glutamine as a nitrogen source. This is Glutamine--fructose-6-phosphate aminotransferase [isomerizing] from Xylella fastidiosa (strain Temecula1 / ATCC 700964).